Consider the following 307-residue polypeptide: Ribonuclease Z (307 aa).

Zn(2+) is bound by residues H63, H65, D67, H68, H141, D212, and H270. D67 functions as the Proton acceptor in the catalytic mechanism.

This sequence belongs to the RNase Z family. As to quaternary structure, homodimer. Zn(2+) serves as cofactor.

The catalysed reaction is Endonucleolytic cleavage of RNA, removing extra 3' nucleotides from tRNA precursor, generating 3' termini of tRNAs. A 3'-hydroxy group is left at the tRNA terminus and a 5'-phosphoryl group is left at the trailer molecule.. In terms of biological role, zinc phosphodiesterase, which displays some tRNA 3'-processing endonuclease activity. Probably involved in tRNA maturation, by removing a 3'-trailer from precursor tRNA. This Bacillus cereus (strain G9842) protein is Ribonuclease Z.